A 264-amino-acid polypeptide reads, in one-letter code: Thymidylate synthase (264 aa).

Arg-21 contributes to the dUMP binding site. His-51 serves as a coordination point for (6R)-5,10-methylene-5,6,7,8-tetrahydrofolate. 126–127 serves as a coordination point for dUMP; sequence RR. The active-site Nucleophile is the Cys-146. DUMP contacts are provided by residues 166 to 169, Asn-177, and 207 to 209; these read RSAD and HLY. Asp-169 contacts (6R)-5,10-methylene-5,6,7,8-tetrahydrofolate. Ala-263 is a binding site for (6R)-5,10-methylene-5,6,7,8-tetrahydrofolate.

The protein belongs to the thymidylate synthase family. Bacterial-type ThyA subfamily. In terms of assembly, homodimer.

It is found in the cytoplasm. It carries out the reaction dUMP + (6R)-5,10-methylene-5,6,7,8-tetrahydrofolate = 7,8-dihydrofolate + dTMP. It functions in the pathway pyrimidine metabolism; dTTP biosynthesis. Its function is as follows. Catalyzes the reductive methylation of 2'-deoxyuridine-5'-monophosphate (dUMP) to 2'-deoxythymidine-5'-monophosphate (dTMP) while utilizing 5,10-methylenetetrahydrofolate (mTHF) as the methyl donor and reductant in the reaction, yielding dihydrofolate (DHF) as a by-product. This enzymatic reaction provides an intracellular de novo source of dTMP, an essential precursor for DNA biosynthesis. The polypeptide is Thymidylate synthase (Pseudomonas aeruginosa (strain LESB58)).